The sequence spans 392 residues: GDP-mannose transporter (392 aa).

The segment covering 1–11 has biased composition (basic and acidic residues); sequence MDDKKNEDLEM. The segment at 1–25 is disordered; it reads MDDKKNEDLEMRNFNGRSSPSQRDP. The Cytoplasmic segment spans residues 1 to 45; sequence MDDKKNEDLEMRNFNGRSSPSQRDPFLAKPGAAAKRGNSAFDLSN. A helical membrane pass occupies residues 46 to 66; that stretch reads VTNSPGISILAYCLASISMTV. Residues 67 to 76 lie on the Lumenal side of the membrane; that stretch reads TNKYCVSGSN. Residues 77 to 97 traverse the membrane as a helical segment; sequence WNLNFFYLAIQSVVCIIAIII. Residues 98-116 are Cytoplasmic-facing; that stretch reads CKQAGLITNLAPFDTKKAK. Residues 117 to 139 form a helical membrane-spanning segment; it reads TWFPISLLLVGMIYTSTKALQFL. Topologically, residues 140–142 are lumenal; the sequence is SVP. Residues 143 to 165 form a helical membrane-spanning segment; it reads VYTIFKNLTIIVIAYGEVLWFGG. Residues 166-171 lie on the Cytoplasmic side of the membrane; that stretch reads SVTPSA. Residues 172-191 form a helical membrane-spanning segment; the sequence is LFSFGLMVLSSVVAAWADIQ. The Lumenal segment spans residues 192–210; it reads HALYGGGAAQSAEAAAALS. Residues 211-231 form a helical membrane-spanning segment; that stretch reads TLNAGYAWMGMNVFCTAAYVL. Residues 232–246 are Cytoplasmic-facing; sequence SMRKVIKKMNFKDWD. A helical membrane pass occupies residues 247-267; sequence TMFYNNLLTIPVLFVCSFIFE. Residues asparagine 268 and asparagine 273 are each glycosylated (N-linked (GlcNAc...) asparagine). The Lumenal portion of the chain corresponds to 268 to 285; the sequence is NWSSENLTKNFPLETRNN. The helical transmembrane segment at 286 to 306 threads the bilayer; it reads LILGMIYSGLATIFISYCSAW. Residues 307 to 314 lie on the Cytoplasmic side of the membrane; the sequence is CIRVTSST. Residues 315 to 337 form a helical membrane-spanning segment; sequence TYSMVGALNKLPIAVSGLVFFAA. The Lumenal segment spans residues 338–340; the sequence is PVT. The helical transmembrane segment at 341–360 threads the bilayer; it reads FGSVSAIFIGFVSGIVYAWA. Residues 361–392 lie on the Cytoplasmic side of the membrane; the sequence is KVRQNQSKGNILPTTQPVMSASSQSNRDAAKA. A disordered region spans residues 373 to 392; the sequence is PTTQPVMSASSQSNRDAAKA.

It belongs to the TPT transporter family. SLC35D subfamily. Homooligomer.

It localises to the golgi apparatus membrane. Its subcellular location is the cytoplasmic vesicle membrane. The protein localises to the endoplasmic reticulum membrane. Its function is as follows. Involved in the import of GDP-mannose from the cytoplasm into the Golgi lumen. This chain is GDP-mannose transporter (gmt1), found in Botryotinia fuckeliana (strain B05.10) (Noble rot fungus).